The chain runs to 115 residues: Double-headed protease inhibitor, submandibular gland (115 aa).

Kazal-like domains lie at 6–66 and 67–115; these read IGRE…ACDI and ECTE…HGEC. Cystine bridges form between C12–C46, C24–C43, C32–C64, C68–C97, C75–C94, and C83–C115.

It localises to the secreted. In terms of biological role, this inhibitor is composed of two homologous actively inhibiting halves: one which inhibits trypsin, the other which inhibits elastase. This chain is Double-headed protease inhibitor, submandibular gland, found in Vulpes vulpes (Red fox).